A 242-amino-acid chain; its full sequence is Lactate utilization protein A 1 (242 aa).

Belongs to the LutA/YkgE family.

In terms of biological role, is involved in L-lactate degradation and allows cells to grow with lactate as the sole carbon source. This is Lactate utilization protein A 1 from Bacillus anthracis (strain CDC 684 / NRRL 3495).